A 90-amino-acid chain; its full sequence is DNA-binding protein HU-1 (90 aa).

Threonine 4 bears the Phosphothreonine mark.

This sequence belongs to the bacterial histone-like protein family. Homodimer.

In terms of biological role, histone-like DNA-binding protein which is capable of wrapping DNA to stabilize it, and thus to prevent its denaturation under extreme environmental conditions. This chain is DNA-binding protein HU-1 (hup2), found in Halalkalibacterium halodurans (strain ATCC BAA-125 / DSM 18197 / FERM 7344 / JCM 9153 / C-125) (Bacillus halodurans).